Here is a 139-residue protein sequence, read N- to C-terminus: Large ribosomal subunit protein uL13 (139 aa).

It belongs to the universal ribosomal protein uL13 family. In terms of assembly, part of the 50S ribosomal subunit.

In terms of biological role, this protein is one of the early assembly proteins of the 50S ribosomal subunit, although it is not seen to bind rRNA by itself. It is important during the early stages of 50S assembly. This is Large ribosomal subunit protein uL13 from Methanococcoides burtonii (strain DSM 6242 / NBRC 107633 / OCM 468 / ACE-M).